Reading from the N-terminus, the 150-residue chain is Small ribosomal subunit protein uS11y (150 aa).

Residues 129-150 (EDVTPVPTDSTRRKGGRRGRRL) form a disordered region. The span at 141–150 (RKGGRRGRRL) shows a compositional bias: basic residues.

This sequence belongs to the universal ribosomal protein uS11 family.

The protein is Small ribosomal subunit protein uS11y of Zea mays (Maize).